The sequence spans 302 residues: Deoxyhypusine hydroxylase (302 aa).

HEAT-like PBS-type repeat units lie at residues 23–49 (ERFR…AFDD), 54–80 (LKHE…VLKD), 87–113 (VRHE…YKKD), 175–201 (DRYR…GLKD), 206–232 (FRHE…NLED), and 239–265 (VRHE…YADD). Positions 56, 57, 89, and 90 each coordinate Fe cation. Fe cation-binding residues include H208, E209, H241, and E242.

It belongs to the deoxyhypusine hydroxylase family. Fe(2+) is required as a cofactor.

It localises to the endoplasmic reticulum membrane. It carries out the reaction [eIF5A protein]-deoxyhypusine + AH2 + O2 = [eIF5A protein]-hypusine + A + H2O. It functions in the pathway protein modification; eIF5A hypusination. Functionally, catalyzes the hydroxylation of the N(6)-(4-aminobutyl)-L-lysine intermediate to form hypusine, an essential post-translational modification only found in mature eIF-5A factor. Essential for organismal viability and plays a role in a wide number of important processes such as cell growth and proliferation, and regulates induction of autophagy and protein synthesis. Has a role in eIF-5A-mediated translational control. This Drosophila pseudoobscura pseudoobscura (Fruit fly) protein is Deoxyhypusine hydroxylase.